A 95-amino-acid polypeptide reads, in one-letter code: Aspartyl/glutamyl-tRNA(Asn/Gln) amidotransferase subunit C (95 aa).

The protein belongs to the GatC family. In terms of assembly, heterotrimer of A, B and C subunits.

The enzyme catalyses L-glutamyl-tRNA(Gln) + L-glutamine + ATP + H2O = L-glutaminyl-tRNA(Gln) + L-glutamate + ADP + phosphate + H(+). It catalyses the reaction L-aspartyl-tRNA(Asn) + L-glutamine + ATP + H2O = L-asparaginyl-tRNA(Asn) + L-glutamate + ADP + phosphate + 2 H(+). Functionally, allows the formation of correctly charged Asn-tRNA(Asn) or Gln-tRNA(Gln) through the transamidation of misacylated Asp-tRNA(Asn) or Glu-tRNA(Gln) in organisms which lack either or both of asparaginyl-tRNA or glutaminyl-tRNA synthetases. The reaction takes place in the presence of glutamine and ATP through an activated phospho-Asp-tRNA(Asn) or phospho-Glu-tRNA(Gln). The chain is Aspartyl/glutamyl-tRNA(Asn/Gln) amidotransferase subunit C from Acidithiobacillus ferrooxidans (strain ATCC 23270 / DSM 14882 / CIP 104768 / NCIMB 8455) (Ferrobacillus ferrooxidans (strain ATCC 23270)).